Consider the following 134-residue polypeptide: uncharacterized protein (134 aa).

The disordered stretch occupies residues 1–30; that stretch reads MGTLQGAALRSRERPSWPQETHGHRERTEE. Residues 10–30 show a composition bias toward basic and acidic residues; that stretch reads RSRERPSWPQETHGHRERTEE.

This is an uncharacterized protein from Homo sapiens (Human).